Here is a 109-residue protein sequence, read N- to C-terminus: MSNIVKFPRASKPPAPEPVQPAAPAAAPAAPKAEGRGLVAGLVKFVWVATVLVWPVLKWVLAIITFFQFVRMLYHWNTPGVYAGWSFLAYFAALTAITYFVSIYKPKGL.

The tract at residues 1 to 27 (MSNIVKFPRASKPPAPEPVQPAAPAAA) is disordered. Positions 11–21 (SKPPAPEPVQP) are enriched in pro residues. Helical transmembrane passes span 47-67 (WVAT…ITFF) and 81-101 (VYAG…TYFV).

The protein localises to the cell membrane. This chain is Protein KleE (kleE), found in Escherichia coli.